Here is a 340-residue protein sequence, read N- to C-terminus: MSTDKITFLLNWQPTPYHIPIFLAQTKGYFKEQGLDMAILEPTNPSDVTELIGSGKVDMGLKAMIHTLAAKARGFPVTSVASLLDEPFTGVLYLKGSGITEDFQSLKGKKIGYVGEFGKIQIDELTKHYGMKPEDYTAVRCGMNVAKYIIEGKIDAGIGIECMQQVELEEYLAKQGRPASDAKMLRIDKLACLGCCCFCTVLYICNDEFLKKNPEKVRKFLKAIKKATDYVLADPVKAWKEYIDFKPQLNNDLSYKQYQRCYAYFSSSLYNVHRDWKKVTGYGKRLAILPPDYVSNYTNEYLSWPEPEEVSDPLEAQRLMAIHQEKCRQEGTFKRLALPA.

Position 62 is an N6-(pyridoxal phosphate)lysine (Lys-62). His-66 is a catalytic residue. A pyridoxal 5'-phosphate-binding site is contributed by 115-118; sequence GEFG. The CCCFC; essential for catalytic activity, may be the site of iron coordination signature appears at 195–199; that stretch reads CCCFC.

It belongs to the NMT1/THI5 family. As to quaternary structure, homodimer. Requires Fe cation as cofactor.

The enzyme catalyses N(6)-(pyridoxal phosphate)-L-lysyl-[4-amino-5-hydroxymethyl-2-methylpyrimidine phosphate synthase] + L-histidyl-[4-amino-5-hydroxymethyl-2-methylpyrimidine phosphate synthase] + 2 Fe(3+) + 4 H2O = L-lysyl-[4-amino-5-hydroxymethyl-2-methylpyrimidine phosphate synthase] + (2S)-2-amino-5-hydroxy-4-oxopentanoyl-[4-amino-5-hydroxymethyl-2-methylpyrimidine phosphate synthase] + 4-amino-2-methyl-5-(phosphooxymethyl)pyrimidine + 3-oxopropanoate + 2 Fe(2+) + 2 H(+). The protein operates within cofactor biosynthesis; thiamine diphosphate biosynthesis. In terms of biological role, responsible for the formation of the pyrimidine heterocycle in the thiamine biosynthesis pathway. Catalyzes the formation of hydroxymethylpyrimidine phosphate (HMP-P) from histidine and pyridoxal phosphate (PLP). The protein uses PLP and the active site histidine to form HMP-P, generating an inactive enzyme. The enzyme can only undergo a single turnover, which suggests it is a suicide enzyme. The chain is 4-amino-5-hydroxymethyl-2-methylpyrimidine phosphate synthase THI5 from Saccharomyces cerevisiae (strain ATCC 204508 / S288c) (Baker's yeast).